An 812-amino-acid chain; its full sequence is Phospholipase D alpha 2 (812 aa).

Residues Met1–Ser36 constitute a propeptide that is removed on maturation. The C2 domain occupies Met1–Val127. Positions Ala328–Arg368 constitute a PLD phosphodiesterase 1 domain. Catalysis depends on residues His333, Lys335, and Asp340. His333 contributes to the a 1,2-diacyl-sn-glycero-3-phosphate binding site. His374 contributes to the Ca(2+) binding site. Residues Gln524 and His663 each coordinate a 1,2-diacyl-sn-glycero-3-phosphate. The PLD phosphodiesterase 2 domain maps to Phe658 to Ser685. Catalysis depends on residues His663, Lys665, and Asp670. Glu724 lines the Ca(2+) pocket.

This sequence belongs to the phospholipase D family. C2-PLD subfamily. It depends on Ca(2+) as a cofactor.

The protein localises to the cytoplasm. It localises to the membrane. The enzyme catalyses a 1,2-diacyl-sn-glycero-3-phosphocholine + H2O = a 1,2-diacyl-sn-glycero-3-phosphate + choline + H(+). Its function is as follows. Hydrolyzes glycerol-phospholipids at the terminal phosphodiesteric bond. Plays an important role in various cellular processes, including phytohormone action, vesicular trafficking, secretion, cytoskeletal arrangement, meiosis, tumor promotion, pathogenesis, membrane deterioration and senescence. This Brassica oleracea var. capitata (Cabbage) protein is Phospholipase D alpha 2 (PLD2).